Consider the following 658-residue polypeptide: Threonine--tRNA ligase (658 aa).

The TGS domain occupies 1-61 (MSDVRVTVQR…AAGDVVEPIT (61 aa)). Positions 259–554 (DHRRLGAELD…LLEHYAGALP (296 aa)) are catalytic. Zn(2+)-binding residues include C353, H404, and H531.

The protein belongs to the class-II aminoacyl-tRNA synthetase family. In terms of assembly, homodimer. Zn(2+) is required as a cofactor.

It localises to the cytoplasm. It catalyses the reaction tRNA(Thr) + L-threonine + ATP = L-threonyl-tRNA(Thr) + AMP + diphosphate + H(+). Its function is as follows. Catalyzes the attachment of threonine to tRNA(Thr) in a two-step reaction: L-threonine is first activated by ATP to form Thr-AMP and then transferred to the acceptor end of tRNA(Thr). Also edits incorrectly charged L-seryl-tRNA(Thr). The protein is Threonine--tRNA ligase of Parafrankia sp. (strain EAN1pec).